The following is a 588-amino-acid chain: Zeta-carotene desaturase, chloroplastic/chromoplastic (588 aa).

This sequence belongs to the zeta carotene desaturase family. NAD(+) serves as cofactor. NADP(+) is required as a cofactor. Requires FAD as cofactor.

The protein resides in the plastid. The protein localises to the chloroplast. Its subcellular location is the chromoplast. The catalysed reaction is 9,9'-di-cis-zeta-carotene + 2 a quinone = 7,7',9,9'-tetra-cis-lycopene + 2 a quinol. Its pathway is carotenoid biosynthesis; lycopene biosynthesis. Catalyzes the conversion of zeta-carotene to lycopene via the intermediary of neurosporene. It carries out two consecutive desaturations (introduction of double bonds) at positions C-7 and C-7'. This chain is Zeta-carotene desaturase, chloroplastic/chromoplastic (ZDS), found in Solanum lycopersicum (Tomato).